A 243-amino-acid polypeptide reads, in one-letter code: Protein-L-isoaspartate O-methyltransferase 2 (243 aa).

A disordered region spans residues 21 to 42 (DACADRGHPSAERSTPETERRR). The segment covering 23 to 42 (CADRGHPSAERSTPETERRR) has biased composition (basic and acidic residues). The active site involves Ser94.

The protein belongs to the methyltransferase superfamily. L-isoaspartyl/D-aspartyl protein methyltransferase family.

The protein resides in the cytoplasm. The enzyme catalyses [protein]-L-isoaspartate + S-adenosyl-L-methionine = [protein]-L-isoaspartate alpha-methyl ester + S-adenosyl-L-homocysteine. Its function is as follows. Catalyzes the methyl esterification of L-isoaspartyl residues in peptides and proteins that result from spontaneous decomposition of normal L-aspartyl and L-asparaginyl residues. It plays a role in the repair and/or degradation of damaged proteins. This Anaeromyxobacter sp. (strain Fw109-5) protein is Protein-L-isoaspartate O-methyltransferase 2.